We begin with the raw amino-acid sequence, 356 residues long: Histidinol-phosphate aminotransferase (356 aa).

Lysine 214 is modified (N6-(pyridoxal phosphate)lysine).

This sequence belongs to the class-II pyridoxal-phosphate-dependent aminotransferase family. Histidinol-phosphate aminotransferase subfamily. In terms of assembly, homodimer. Requires pyridoxal 5'-phosphate as cofactor.

The enzyme catalyses L-histidinol phosphate + 2-oxoglutarate = 3-(imidazol-4-yl)-2-oxopropyl phosphate + L-glutamate. The protein operates within amino-acid biosynthesis; L-histidine biosynthesis; L-histidine from 5-phospho-alpha-D-ribose 1-diphosphate: step 7/9. The sequence is that of Histidinol-phosphate aminotransferase from Escherichia coli O8 (strain IAI1).